An 89-amino-acid chain; its full sequence is uncharacterized protein (89 aa).

3 helical membrane passes run 5-27 (TLTE…GFTA), 32-51 (LYIG…KRLL), and 63-85 (LFFS…ALVA).

The protein resides in the cell membrane. This is an uncharacterized protein from Bacillus subtilis (strain 168).